Consider the following 543-residue polypeptide: Dipeptide-binding protein DppE (543 aa).

An N-terminal signal peptide occupies residues 1-22 (MKRVKKLWGMGLALGLSFALMG). A lipid anchor (N-palmitoyl cysteine) is attached at cysteine 23. The S-diacylglycerol cysteine moiety is linked to residue cysteine 23.

This sequence belongs to the bacterial solute-binding protein 5 family.

The protein localises to the cell membrane. In terms of biological role, probably part of the ABC transporter DppBCDE involved in dipeptide transport. In Bacillus subtilis (strain 168), this protein is Dipeptide-binding protein DppE (dppE).